The following is a 412-amino-acid chain: MVATSATSSFFPVPSSSLDPNGKGNKIGSTNLAGLNSAPNSGRMKVKPNAQAPPKINGKKVGLPGSVDIVRTDTETSSHPAPRTFINQLPDWSMLLAAITTIFLAAEKQWMMLDWKPRRSDMLVDPFGIGRIVQDGLVFRQNFSIRSYEIGADRSASIETVMNHLQETALNHVKTAGLLGDGFGSTPEMFKKNLIWVVTRMQVVVDKYPTWGDVVEVDTWVSQSGKNGMRRDWLVRDCNTGETLTRASSVWVMMNKLTRRLSKIPEEVRGEIEPYFVNSDPVLAEDSRKLTKIDDKTADYVRSGLTPRWSDLDVNQHVNNVKYIGWILESAPVGIMERQKLKSMTLEYRRECGRDSVLQSLTAVTGCDIGNLATAGDVECQHLLRLQDGAEVVRGRTEWSSKTPTTTWGTAP.

Composition is skewed to polar residues over residues 1–19 (MVAT…SSLD) and 27–40 (IGST…SAPN). A chloroplast-targeting transit peptide spans 1 to 49 (MVATSATSSFFPVPSSSLDPNGKGNKIGSTNLAGLNSAPNSGRMKVKPN). Residues 1–64 (MVATSATSSF…KINGKKVGLP (64 aa)) are disordered. Active-site residues include Asn315, His317, and Cys352.

Belongs to the acyl-ACP thioesterase family. In terms of tissue distribution, highly expressed in flowers. Expressed in roots, leaves, stems, siliques and seeds.

The protein localises to the plastid. It localises to the chloroplast. The catalysed reaction is hexadecanoyl-[ACP] + H2O = hexadecanoate + holo-[ACP] + H(+). Functionally, plays an essential role in chain termination during de novo fatty acid synthesis. Possesses high thioesterase activity for palmitoyl-ACP versus other acyl-ACPs. Substrate preference is 16:0 &gt; 18:1 &gt; 18:0 &gt; 16:1. Plays an essential role in the supply of saturated fatty acids necessary for plant growth and seed development. Contributes to 16:0 production particularly in flowers. May be involved in the synthesis of long chain fatty acid. In Arabidopsis thaliana (Mouse-ear cress), this protein is Palmitoyl-acyl carrier protein thioesterase, chloroplastic (FATB).